A 1544-amino-acid chain; its full sequence is Protein mahjong (1544 aa).

The disordered stretch occupies residues 1 to 110 (MSEGSGSENA…AAADRRQATK (110 aa)). The span at 10–35 (AAAAEAAAEAEAATEAALMAEAVAVA) shows a compositional bias: low complexity. Residues 38–91 (SDEEEQPEAEDMPEQAGDNQEEDAAEQQDGGEPEADEDADADDAMSVENAENES) are compositionally biased toward acidic residues. Residues S565 and S569 each carry the phosphoserine modification. The LisH domain occupies 912-944 (NKQQLYQLIFEHLESNGLSQTAQMLQREVGLPL). 2 disordered regions span residues 946 to 973 (TPTT…SRNR) and 987 to 1059 (GNGD…LAED). S955 carries the post-translational modification Phosphoserine. Residues 961-971 (SLPSGSSSLSR) are compositionally biased toward low complexity. Over residues 1016-1027 (PNFSSLNTTQTP) the composition is skewed to polar residues. 2 consecutive short sequence motifs (DWD box) follow at residues 1302–1309 (VLWDVRSG) and 1338–1345 (EVWDLRTF). 2 disordered regions span residues 1447 to 1475 (KSER…ENTF) and 1487 to 1544 (LRNL…SSDD). Acidic residues-rich tracts occupy residues 1451 to 1467 (SEEE…EDGS) and 1495 to 1535 (NDDE…DVLE).

It belongs to the VPRBP/DCAF1 family. Component of the CUL4-RBX1-DDB1-DCAF1 E3 ubiquitin-protein ligase complex. Interacts with l(2)gl.

It localises to the nucleus. It participates in protein modification; protein ubiquitination. Its function is as follows. Probable substrate recognition component of tsome E3 ubiquitin-protein ligase complex. Plays a key role in cell competition via its interaction with l(2)gl. The polypeptide is Protein mahjong (mahj) (Drosophila melanogaster (Fruit fly)).